Here is a 699-residue protein sequence, read N- to C-terminus: Auxin response factor 1 (699 aa).

Positions 122-224 (FCKILTPSDT…EQRVGVRRLV (103 aa)) form a DNA-binding region, TF-B3. Disordered regions lie at residues 539–565 (TTTDDKSSVGAGEASAKGTGSHEDSGQ) and 680–699 (EPHPKLLSSANPEQDQKTGF). Residues 595-684 (RTRIKVQMHG…DEKKIEPHPK (90 aa)) form the PB1 domain. Positions 687 to 699 (SSANPEQDQKTGF) are enriched in polar residues.

The protein belongs to the ARF family. As to quaternary structure, homodimers and heterodimers. As to expression, expressed in roots, culms, leaves and young panicles.

It localises to the nucleus. Its function is as follows. Auxin response factors (ARFs) are transcriptional factors that bind specifically to the DNA sequence 5'-TGTCTC-3' found in the auxin-responsive promoter elements (AuxREs). The protein is Auxin response factor 1 (ARF1) of Oryza sativa subsp. japonica (Rice).